A 408-amino-acid chain; its full sequence is COP9 signalosome complex subunit 4 (408 aa).

One can recognise a PCI domain in the interval 194 to 374 (RIQDARRRFL…GIIYFESNTT (181 aa)).

Belongs to the CSN4 family. Component of the COP9 signalosome (CSN) complex.

It localises to the cytoplasm. It is found in the nucleus. Its function is as follows. Component of the COP9 signalosome (CSN) complex that acts as an regulator of the ubiquitin (Ubl) conjugation pathway by mediating the deneddylation of the cullin subunit of SCF-type E3 ubiquitin-protein ligase complexes. The CSN complex seems to link protein degradation to sexual development. Required for fruit body formation. This chain is COP9 signalosome complex subunit 4 (csnD), found in Emericella nidulans (strain FGSC A4 / ATCC 38163 / CBS 112.46 / NRRL 194 / M139) (Aspergillus nidulans).